The primary structure comprises 957 residues: Protein translocase subunit SecA (957 aa).

Residues glutamine 86, 104–108 (GEGKT), and aspartate 494 each bind ATP. The span at 929–947 (SRPAPAPTAAASPDPSSAS) shows a compositional bias: low complexity. The tract at residues 929–957 (SRPAPAPTAAASPDPSSASGVVEADFTEE) is disordered.

It belongs to the SecA family. As to quaternary structure, monomer and homodimer. Part of the essential Sec protein translocation apparatus which comprises SecA, SecYEG and auxiliary proteins SecDF. Other proteins may also be involved.

The protein localises to the cell inner membrane. The protein resides in the cellular thylakoid membrane. Its subcellular location is the cytoplasm. It catalyses the reaction ATP + H2O + cellular proteinSide 1 = ADP + phosphate + cellular proteinSide 2.. Part of the Sec protein translocase complex. Interacts with the SecYEG preprotein conducting channel. Has a central role in coupling the hydrolysis of ATP to the transfer of proteins into and across the cell membrane, serving as an ATP-driven molecular motor driving the stepwise translocation of polypeptide chains across the membrane. Its function is as follows. Probably participates in protein translocation into and across both the cytoplasmic and thylakoid membranes in cyanobacterial cells. This is Protein translocase subunit SecA from Synechococcus sp. (strain JA-2-3B'a(2-13)) (Cyanobacteria bacterium Yellowstone B-Prime).